The primary structure comprises 579 residues: Aspartate--tRNA(Asp/Asn) ligase (579 aa).

E169 lines the L-aspartate pocket. The interval 193–196 (QLFK) is aspartate. L-aspartate is bound at residue R215. ATP is bound by residues 215–217 (RDE) and Q224. H437 is an L-aspartate binding site. ATP is bound at residue E471. Position 478 (R478) interacts with L-aspartate. 523–526 (GWDR) is a binding site for ATP. Residues 551–579 (DPLTGAPTPITAEQRREAGVDAVPEQATS) are disordered.

The protein belongs to the class-II aminoacyl-tRNA synthetase family. Type 1 subfamily. As to quaternary structure, homodimer.

Its subcellular location is the cytoplasm. The catalysed reaction is tRNA(Asx) + L-aspartate + ATP = L-aspartyl-tRNA(Asx) + AMP + diphosphate. Aspartyl-tRNA synthetase with relaxed tRNA specificity since it is able to aspartylate not only its cognate tRNA(Asp) but also tRNA(Asn). Reaction proceeds in two steps: L-aspartate is first activated by ATP to form Asp-AMP and then transferred to the acceptor end of tRNA(Asp/Asn). The chain is Aspartate--tRNA(Asp/Asn) ligase from Thermobifida fusca (strain YX).